The sequence spans 433 residues: Pyrimidine-nucleoside phosphorylase (433 aa).

Residue 81-83 coordinates phosphate; it reads KHS. Positions 88 and 90 each coordinate K(+). Phosphate-binding positions include threonine 92, 108-110, and threonine 120; that span reads KMS. 2 residues coordinate substrate: arginine 168 and lysine 187. Positions 243, 246, and 255 each coordinate K(+).

The protein belongs to the thymidine/pyrimidine-nucleoside phosphorylase family. As to quaternary structure, homodimer. Requires K(+) as cofactor.

The catalysed reaction is uridine + phosphate = alpha-D-ribose 1-phosphate + uracil. It catalyses the reaction thymidine + phosphate = 2-deoxy-alpha-D-ribose 1-phosphate + thymine. The enzyme catalyses 2'-deoxyuridine + phosphate = 2-deoxy-alpha-D-ribose 1-phosphate + uracil. Functionally, catalyzes phosphorolysis of the pyrimidine nucleosides uridine, thymidine and 2'-deoxyuridine with the formation of the corresponding pyrimidine base and ribose-1-phosphate. This Staphylococcus aureus (strain NCTC 8325 / PS 47) protein is Pyrimidine-nucleoside phosphorylase (pdp).